We begin with the raw amino-acid sequence, 255 residues long: MNMNKIALVYNENSKSSSSIEEIKKLYTYCDVEDADVIMVAGGDGELLHNIHRYMHLNIPFYGVNLGSLGFLMNPLDIKNILQNIQESTASTLNPLLMQAEDVDGQIHKALAINEVSIFRKTNQAAKFRIEVNGVERMSELVADGALVATPAGSSAYNLSAGGHILPLESNMLCLTPICSFRPRRWHGALLPSSASIKFEILNTNKRPVNATADFQEFSNIKSVTIKSTNDKSIKLLFNKNHTLEDRIIKEQFGG.

Aspartate 44 functions as the Proton acceptor in the catalytic mechanism. Residues 44 to 45 (DG), histidine 49, 114 to 115 (NE), aspartate 144, alanine 152, 155 to 160 (SAYNLS), and glutamine 216 contribute to the NAD(+) site.

This sequence belongs to the NAD kinase family. The cofactor is a divalent metal cation.

It is found in the cytoplasm. It carries out the reaction NAD(+) + ATP = ADP + NADP(+) + H(+). Functionally, involved in the regulation of the intracellular balance of NAD and NADP, and is a key enzyme in the biosynthesis of NADP. Catalyzes specifically the phosphorylation on 2'-hydroxyl of the adenosine moiety of NAD to yield NADP. The chain is NAD kinase from Rickettsia bellii (strain OSU 85-389).